The chain runs to 201 residues: Large ribosomal subunit protein bL25 (201 aa).

This sequence belongs to the bacterial ribosomal protein bL25 family. CTC subfamily. Part of the 50S ribosomal subunit; part of the 5S rRNA/L5/L18/L25 subcomplex. Contacts the 5S rRNA. Binds to the 5S rRNA independently of L5 and L18.

This is one of the proteins that binds to the 5S RNA in the ribosome where it forms part of the central protuberance. In Thiobacillus denitrificans (strain ATCC 25259 / T1), this protein is Large ribosomal subunit protein bL25.